Reading from the N-terminus, the 224-residue chain is Zinc finger protein 22 (224 aa).

A disordered region spans residues 1 to 34; the sequence is MRLAKPKAGISRSSSQGKAYENKRKTGRQRQKWG. An N6-acetyllysine mark is found at K18 and K23. S49 bears the Phosphoserine mark. C2H2-type zinc fingers lie at residues 55–77, 83–105, 111–133, 139–161, and 167–189; these read YKCT…QKIH, HKCA…RRIH, YKCD…QRIH, YQCD…QRTH, and YQCS…MKVH.

This sequence belongs to the krueppel C2H2-type zinc-finger protein family. As to expression, in the embryo, expressed in developing craniofacial structures including dental epithelium of maxillary molar tooth organs, tongue epithelium and muscle, and craniofacial bone osteoblasts. In the adult, expressed in mesoderm-derived tissues such as skeletal muscle, heart, kidney and liver. Intermediate expression in spleen, thymus and brain. Low levels in endoderm-derived tissues such as intestine and colon.

It is found in the nucleus. Functionally, binds DNA through the consensus sequence 5'-CAATG-3'. May be involved in transcriptional regulation and may play a role in tooth formation. The polypeptide is Zinc finger protein 22 (ZNF22) (Homo sapiens (Human)).